Here is a 224-residue protein sequence, read N- to C-terminus: Thiamine-phosphate synthase (224 aa).

4-amino-2-methyl-5-(diphosphooxymethyl)pyrimidine contacts are provided by residues 43-47 (QYRPK) and Asn-75. Mg(2+)-binding residues include Asp-76 and Asp-95. Ser-114 lines the 4-amino-2-methyl-5-(diphosphooxymethyl)pyrimidine pocket. Residue 141–143 (SAT) participates in 2-[(2R,5Z)-2-carboxy-4-methylthiazol-5(2H)-ylidene]ethyl phosphate binding. 4-amino-2-methyl-5-(diphosphooxymethyl)pyrimidine is bound at residue Lys-144. 2-[(2R,5Z)-2-carboxy-4-methylthiazol-5(2H)-ylidene]ethyl phosphate is bound at residue Gly-171.

This sequence belongs to the thiamine-phosphate synthase family. Requires Mg(2+) as cofactor.

It catalyses the reaction 2-[(2R,5Z)-2-carboxy-4-methylthiazol-5(2H)-ylidene]ethyl phosphate + 4-amino-2-methyl-5-(diphosphooxymethyl)pyrimidine + 2 H(+) = thiamine phosphate + CO2 + diphosphate. The enzyme catalyses 2-(2-carboxy-4-methylthiazol-5-yl)ethyl phosphate + 4-amino-2-methyl-5-(diphosphooxymethyl)pyrimidine + 2 H(+) = thiamine phosphate + CO2 + diphosphate. It carries out the reaction 4-methyl-5-(2-phosphooxyethyl)-thiazole + 4-amino-2-methyl-5-(diphosphooxymethyl)pyrimidine + H(+) = thiamine phosphate + diphosphate. The protein operates within cofactor biosynthesis; thiamine diphosphate biosynthesis; thiamine phosphate from 4-amino-2-methyl-5-diphosphomethylpyrimidine and 4-methyl-5-(2-phosphoethyl)-thiazole: step 1/1. Its function is as follows. Condenses 4-methyl-5-(beta-hydroxyethyl)thiazole monophosphate (THZ-P) and 2-methyl-4-amino-5-hydroxymethyl pyrimidine pyrophosphate (HMP-PP) to form thiamine monophosphate (TMP). The chain is Thiamine-phosphate synthase from Methylococcus capsulatus (strain ATCC 33009 / NCIMB 11132 / Bath).